The primary structure comprises 122 residues: Phosphoribosyl-ATP pyrophosphatase (122 aa).

It belongs to the PRA-PH family.

The protein localises to the cytoplasm. The catalysed reaction is 1-(5-phospho-beta-D-ribosyl)-ATP + H2O = 1-(5-phospho-beta-D-ribosyl)-5'-AMP + diphosphate + H(+). The protein operates within amino-acid biosynthesis; L-histidine biosynthesis; L-histidine from 5-phospho-alpha-D-ribose 1-diphosphate: step 2/9. This chain is Phosphoribosyl-ATP pyrophosphatase, found in Burkholderia thailandensis (strain ATCC 700388 / DSM 13276 / CCUG 48851 / CIP 106301 / E264).